A 273-amino-acid chain; its full sequence is Signal recognition particle subunit SEC65 (273 aa).

The disordered stretch occupies residues proline 25–leucine 71. The span at asparagine 55 to serine 65 shows a compositional bias: low complexity.

In terms of assembly, fungal signal recognition particle (SRP) complex consists of a 7S RNA molecule (scR1) and at least six protein subunits: SRP72, SRP68, SRP54, SEC65, SRP21 and SRP14.

Its subcellular location is the cytoplasm. Functionally, signal-recognition-particle (SRP) assembly has a crucial role in targeting secretory proteins to the rough endoplasmic reticulum (ER) membrane. SRP is required for the cotranslational protein translocation for ER import and preferentially recognizes strongly hydrophobic signal sequences. It is involved in targeting the nascent chain-ribosome (RNC) complex to the ER and is proposed to participate in the arrest of nascent chain elongation during membrane targeting. SEC65 is required for SRP integrity. The chain is Signal recognition particle subunit SEC65 (SEC65) from Saccharomyces cerevisiae (strain ATCC 204508 / S288c) (Baker's yeast).